Reading from the N-terminus, the 750-residue chain is ARQAAAPLLPGVLLLFSILPASQQGGVPGAIPGGGVPGGGFFPGAGVGGLGAGLGAGLGAGGKPLKPGVSGLGGLGPLGLQPGAGVGGLGAGLGAFPGAAFPGAASAAALKAAAKAGAGLGGVGGIGGLGGVGGVGVPGGLGVPGVVQPGVGAAGKPPKVPGAGIPGAFPGGGVLPGAGIRFPGVGVLPGVPTGTGIKAKGPGAGAFAGIPGGYRLPFVNGLGPGGIGAGVLAGKAGYPTGTGVGAQAAAAKAAAKYGAGVLPGAGGIPGVGGVVPGVGVVPGAGVGGPAAAAAAAKAAAKAGAYGAGVLPGAGGVPGVVPGVGVVPGLVPGVGGIPGVAGVGTPAGAAAAAAKAAKYGAGVPGVGVPGVGIGGVPGVPGVPGVPGVPGVPGVPGVPGVPGVPGVPGVPGVVPGVGVGGPAAAAAAKAAAKAAAFGAGRVPGVGVPGAVPGVGVPGVGVPGVGVPGVGVPGVGVPGVGVPGVGVPGVGVPGVGVPGVGVPGLVPGAGPAAAAKAAAKAAKYGAGGLAPGVGGLAPAVGGLAPGVGGLVPGVGGLVPGVGGLAPGVGGLAPGVGAVPGVGGPAAAAKAAAKAAKYGAGVGGVPGAVPGAVPGVPGVPGVTPGVGGVPSLVPGVGVPGVGVLPGAGIPQVGVQPGAKPPKFGVPGAGVPGVGGIPGGLGVGGLGVGGLGAGGLGAGVGVPGFGVSPIFPGGVGGQLGFGGKPPKTYGGALGALGFRGGVGCAQGKYCGRKRK.

The first 24 residues, 1-24 (ARQAAAPLLPGVLLLFSILPASQQ), serve as a signal peptide directing secretion. Pro32, Pro67, Pro102, Pro176, Pro189, Pro192, and Pro211 each carry 4-hydroxyproline. The stretch at 83 to 127 (GAGVGGLGAGLGAFPGAAFPGAASAAALKAAAKAGAGLGGVGGIG) is repeat 1. The 8 X tandem repeats stretch occupies residues 83–686 (GAGVGGLGAG…GVGGLGVGGL (604 aa)). 7 consecutive repeat copies span residues 219-262 (VNGL…AGVL), 263-318 (PGAG…GVPG), 319-393 (VVPG…VPGV), 394-482 (PGVP…VPGV), 483-554 (GVPG…VGGL), 555-619 (VPGV…PGVT), and 620-686 (PGVG…VGGL). A 4-hydroxyproline mark is found at Pro276, Pro345, Pro363, Pro368, Pro441, Pro455, and Pro480. 4-hydroxyproline occurs at positions 576, 635, and 720. Cys739 and Cys745 form a disulfide bridge.

This sequence belongs to the elastin family. As to quaternary structure, the polymeric elastin chains are cross-linked together into an extensible 3D network. Elastin is formed through the cross-linking of its soluble precursor tropoelastin. Cross-linking is initiated through the action of lysyl oxidase on exposed lysines to form allysine. Subsequent spontaneous condensation reactions with other allysine or unmodified lysine residues result in various bi-, tri-, and tetrafunctional cross-links. The most abundant cross-links in mature elastin fibers are lysinonorleucine, allysine aldol, desmosine, and isodesmosine. In terms of processing, hydroxylated on proline residues. Post-translationally, hydroxylation on proline residues within the sequence motif, GXPG, is most likely to be 4-hydroxy as this fits the requirement for 4-hydroxylation in vertebrates.

It localises to the secreted. Its subcellular location is the extracellular space. The protein resides in the extracellular matrix. In terms of biological role, major structural protein of tissues such as aorta and nuchal ligament, which must expand rapidly and recover completely. The protein is Elastin (ELN) of Gallus gallus (Chicken).